We begin with the raw amino-acid sequence, 260 residues long: Isoprenyl transferase (260 aa).

D40 is a catalytic residue. D40 serves as a coordination point for Mg(2+). Substrate is bound by residues G41–R44, W45, R53, H57, and S85–E87. Residue N88 is the Proton acceptor of the active site. Substrate contacts are provided by residues W89, R91, R208, and R214–S216. E227 contacts Mg(2+).

The protein belongs to the UPP synthase family. In terms of assembly, homodimer. The cofactor is Mg(2+).

In terms of biological role, catalyzes the condensation of isopentenyl diphosphate (IPP) with allylic pyrophosphates generating different type of terpenoids. The protein is Isoprenyl transferase of Bacillus subtilis (strain 168).